We begin with the raw amino-acid sequence, 3284 residues long: Location of vulva defective 1 (3284 aa).

A signal peptide spans 1-21; the sequence is MKKSNFFVLLLLAISAIQIDG. Disordered regions lie at residues 226–326, 350–505, 623–702, 827–926, and 1043–1216; these read ESTS…ITST, TTML…GTNP, VASS…ADST, STSE…ASTE, and TTTE…SLAT. Low complexity-rich tracts occupy residues 227 to 326 and 350 to 500; these read STST…ITST and TTML…TTSS. Residues 827–913 are compositionally biased toward low complexity; sequence STSEVTSTTS…PSDSSSASDS (87 aa). Residues 914–926 are compositionally biased toward polar residues; it reads MRTTTVDPDASTE. The segment covering 1043-1057 has biased composition (low complexity); sequence TTTETPPTTVSSSDD. Residues 1060–1078 are compositionally biased toward gly residues; it reads GKTGGTGATGGTGGTGSGG. Over residues 1079 to 1104 the composition is skewed to low complexity; sequence SATTLSTGDAVRSTTSGSGSGQSSTG. A compositionally biased stretch (gly residues) spans 1105-1127; it reads SGAGGSGTTASGSGSGGSSGTGS. The segment covering 1128 to 1138 has biased composition (polar residues); the sequence is DGVNSGKTTAL. The segment covering 1163-1192 has biased composition (low complexity); that stretch reads GSGSDSNGSSGVSTKSSSGSDTSGSSDSSG. Positions 1197–1216 are enriched in polar residues; it reads FSATAQPSTRTTKTRSSLAT. In terms of domain architecture, GAIN-B spans 2064–2227; it reads WNNSLQVEII…SVGAFNPTID (164 aa). Cys-2181 and Cys-2209 are joined by a disulfide. Residues 2181-2227 are GPS; sequence CYFYQKTSDVFNSEGMYPSDGQGMQFVNCSTDHLTMFSVGAFNPTID. Residues 2245 to 2265 traverse the membrane as a helical segment; that stretch reads VMIAAVFMLVVYGCLTINAII. Residues 2288–2411 form the PLAT domain; sequence YMYVIAVETG…GDGETERLAR (124 aa). 10 helical membrane-spanning segments follow: residues 2453-2473, 2496-2516, 2557-2577, 2592-2612, 2672-2692, 2945-2965, 2994-3014, 3043-3063, 3089-3109, and 3144-3164; these read DYSV…ITIL, IAFG…HILL, IIVF…MSLM, LILW…FLIL, LFIT…MVML, MLYI…YLYG, WNFM…AYTI, WEIV…CKMI, FGIA…AVLG, and FAFV…LQLY.

This sequence belongs to the polycystin family. As to quaternary structure, interacts (via PLAT domain) with atp-2 (via N-terminus) and with kin-10 (via C-terminus). Interacts (via C-terminus) with isoform a of stam-1/pqn-19 (via C-terminus). Autoproteolytically processed at the GPS region of the GAIN-B domain; this cleavage modulates receptor activity. As to expression, exclusively expressed in a subset of three categories of adult male sensory neurons: ray neurons, hook neurons and head cephalic (CEM) neurons.

It is found in the membrane. Its subcellular location is the cell projection. The protein resides in the cilium. Functionally, required for two aspects of male mating behavior: response to hermaphrodite contact and vulva location. Acts in the same pathway as pkd-2 and atp-2 in response behavior. May be required for ciliary targeting of pkd-2. The chain is Location of vulva defective 1 (lov-1) from Caenorhabditis elegans.